The chain runs to 257 residues: Deoxyribose-phosphate aldolase (257 aa).

The active-site Proton donor/acceptor is the aspartate 102. Catalysis depends on lysine 166, which acts as the Schiff-base intermediate with acetaldehyde. Catalysis depends on lysine 198, which acts as the Proton donor/acceptor.

The protein belongs to the DeoC/FbaB aldolase family. DeoC type 2 subfamily.

Its subcellular location is the cytoplasm. It catalyses the reaction 2-deoxy-D-ribose 5-phosphate = D-glyceraldehyde 3-phosphate + acetaldehyde. The protein operates within carbohydrate degradation; 2-deoxy-D-ribose 1-phosphate degradation; D-glyceraldehyde 3-phosphate and acetaldehyde from 2-deoxy-alpha-D-ribose 1-phosphate: step 2/2. Catalyzes a reversible aldol reaction between acetaldehyde and D-glyceraldehyde 3-phosphate to generate 2-deoxy-D-ribose 5-phosphate. The polypeptide is Deoxyribose-phosphate aldolase (Shewanella loihica (strain ATCC BAA-1088 / PV-4)).